The chain runs to 251 residues: Imidazole glycerol phosphate synthase subunit HisF (251 aa).

Residues Asp-11 and Asp-130 contribute to the active site.

The protein belongs to the HisA/HisF family. As to quaternary structure, heterodimer of HisH and HisF.

It is found in the cytoplasm. The catalysed reaction is 5-[(5-phospho-1-deoxy-D-ribulos-1-ylimino)methylamino]-1-(5-phospho-beta-D-ribosyl)imidazole-4-carboxamide + L-glutamine = D-erythro-1-(imidazol-4-yl)glycerol 3-phosphate + 5-amino-1-(5-phospho-beta-D-ribosyl)imidazole-4-carboxamide + L-glutamate + H(+). Its pathway is amino-acid biosynthesis; L-histidine biosynthesis; L-histidine from 5-phospho-alpha-D-ribose 1-diphosphate: step 5/9. Its function is as follows. IGPS catalyzes the conversion of PRFAR and glutamine to IGP, AICAR and glutamate. The HisF subunit catalyzes the cyclization activity that produces IGP and AICAR from PRFAR using the ammonia provided by the HisH subunit. In Pelagibacter ubique (strain HTCC1062), this protein is Imidazole glycerol phosphate synthase subunit HisF.